The sequence spans 298 residues: Apolipoprotein E (298 aa).

Residues 1–18 form the signal peptide; the sequence is MKVLWAALVVTLLAGCRA. 8 repeat units span residues 74–95, 96–117, 118–139, 140–161, 162–183, 184–204, 205–222, and 223–244. Residues 74–244 form an 8 X 22 AA approximate tandem repeats region; that stretch reads LLIEDTMKEV…RLEEVREQME (171 aa). Residue Met-137 is modified to Methionine sulfoxide. Residue Ser-141 is modified to Phosphoserine. The tract at residues 152–162 is LDL and other lipoprotein receptors binding; that stretch reads HPRKMKRRLQR. 156–159 serves as a coordination point for heparin; the sequence is MKRR. Position 218-225 (218-225) interacts with heparin; that stretch reads GEQMRGRL. Positions 260-272 are specificity for association with VLDL; it reads RLKSWFEPMMEDM.

It belongs to the apolipoprotein A1/A4/E family. As to quaternary structure, homotetramer. May interact with ABCA1; functionally associated with ABCA1 in the biogenesis of HDLs. May interact with APP/A4 amyloid-beta peptide; the interaction is extremely stable in vitro but its physiological significance is unclear. May interact with MAPT. May interact with MAP2. In the cerebrospinal fluid, interacts with secreted SORL1. Interacts with PMEL; this allows the loading of PMEL luminal fragment on ILVs to induce fibril nucleation. In terms of processing, APOE exists as multiple glycosylated and sialylated glycoforms within cells and in plasma. The extent of glycosylation and sialylation are tissue and context specific. Glycated in plasma VLDL. Post-translationally, phosphorylated by FAM20C in the extracellular medium.

It localises to the secreted. It is found in the extracellular space. The protein resides in the extracellular matrix. Its subcellular location is the extracellular vesicle. The protein localises to the endosome. It localises to the multivesicular body. Its function is as follows. APOE is an apolipoprotein, a protein associating with lipid particles, that mainly functions in lipoprotein-mediated lipid transport between organs via the plasma and interstitial fluids. APOE is a core component of plasma lipoproteins and is involved in their production, conversion and clearance. Apolipoproteins are amphipathic molecules that interact both with lipids of the lipoprotein particle core and the aqueous environment of the plasma. As such, APOE associates with chylomicrons, chylomicron remnants, very low density lipoproteins (VLDL) and intermediate density lipoproteins (IDL) but shows a preferential binding to high-density lipoproteins (HDL). It also binds a wide range of cellular receptors including the LDL receptor/LDLR and the very low-density lipoprotein receptor/VLDLR that mediate the cellular uptake of the APOE-containing lipoprotein particles. Finally, APOE also has a heparin-binding activity and binds heparan-sulfate proteoglycans on the surface of cells, a property that supports the capture and the receptor-mediated uptake of APOE-containing lipoproteins by cells. The sequence is that of Apolipoprotein E (APOE) from Cavia porcellus (Guinea pig).